Reading from the N-terminus, the 154-residue chain is Small ribosomal subunit protein uS9 (154 aa).

Disordered stretches follow at residues 1–33 (MVPP…SGLG) and 115–154 (PENN…YSKR). Over residues 135-154 (KERKKAGLKKARKAPQYSKR) the composition is skewed to basic residues.

This sequence belongs to the universal ribosomal protein uS9 family.

The chain is Small ribosomal subunit protein uS9 from Tropheryma whipplei (strain TW08/27) (Whipple's bacillus).